The primary structure comprises 434 residues: Na(+)/H(+) antiporter NhaA 1 (434 aa).

10 helical membrane passes run 30–50 (TGGLLLLVFTVIALVWANVAG), 70–90 (LSIEHWAADGLLAIFFFVTGL), 108–128 (ALPIAAAVGGMAVPALLFVLV), 141–161 (VGWATPTATDIAFALGILAVV), 172–192 (FLLTLAVVDDLLGITVIAIFY), 195–215 (QVHWTPLLLALLTLAAFTVAV), 286–306 (FAVPVFALFSAGVAIGGVSGF), 318–338 (VIAGLVLGKPIGIVGTTWLLA), 354–374 (VLGMAMLAGMGFTVSLLIGSL), and 386–406 (VTLGVLVGSLLSAVLAAVVLS).

The protein belongs to the NhaA Na(+)/H(+) (TC 2.A.33) antiporter family.

It is found in the cell membrane. It catalyses the reaction Na(+)(in) + 2 H(+)(out) = Na(+)(out) + 2 H(+)(in). Na(+)/H(+) antiporter that extrudes sodium in exchange for external protons. The sequence is that of Na(+)/H(+) antiporter NhaA 1 from Kineococcus radiotolerans (strain ATCC BAA-149 / DSM 14245 / SRS30216).